The primary structure comprises 555 residues: Inorganic phosphate transporter 1-11 (555 aa).

The Cytoplasmic segment spans residues 1–28 (MADADGGSNLAVLDALDSARTQMYHMKA). The chain crosses the membrane as a helical span at residues 29–49 (IVIAGMGFFTDAYDLFCISTV). The Extracellular portion of the chain corresponds to 50-77 (SKLLGRLYYQPDGSTDSKPGALSKTANN). Residues 78–98 (MVIGVALVGTLMGQLVFGYFG) traverse the membrane as a helical segment. Over 99 to 105 (DKLGRKR) the chain is Cytoplasmic. The helical transmembrane segment at 106 to 126 (VYGVTLILMAACAIGSGLSFG) threads the bilayer. Over 127 to 130 (SSRK) the chain is Extracellular. Residues 131 to 151 (AVIGTLCFFRFWLGFGIGGDY) traverse the membrane as a helical segment. Residues 152 to 167 (PLSATIMSEYSNKKTR) lie on the Cytoplasmic side of the membrane. Residues 168 to 188 (GAFIAAVFAMQGVGIIFAGLV) traverse the membrane as a helical segment. Over 189–216 (SMIVSSIFLTYNKAPSYKGNHDLSRQMP) the chain is Extracellular. The helical transmembrane segment at 217 to 237 (AADYVWRIVLMIGAFPALATF) threads the bilayer. At 238-298 (YWRMKMPETA…PLLSMEFARR (61 aa)) the chain is on the cytoplasmic side. A helical membrane pass occupies residues 299–319 (HGLHLIGTTTTWFLLDIAFYS). Topologically, residues 320–351 (QNLTQKDIFPAMGLISGAAEVNALTEMFQISK) are extracellular. The helical transmembrane segment at 352–372 (ASFLVALLGTFPGYWVTVALI) threads the bilayer. Residues 373–377 (DKMGR) lie on the Cytoplasmic side of the membrane. A helical membrane pass occupies residues 378 to 398 (YMIQLIGFFMMSMFMLAMGIL). The Extracellular portion of the chain corresponds to 399-408 (YDYLKTHHFL). Residues 409 to 436 (FGLLYALTFFFANFGPNSTTFVLPAELF) traverse the membrane as a helical segment. Residues 437–442 (PTRVRS) lie on the Cytoplasmic side of the membrane. A helical transmembrane segment spans residues 443 to 463 (TCHAISAAAGKAGAIVAAFGI). Residues 464–477 (QKLTYNSQVKSIKK) are Extracellular-facing. A helical transmembrane segment spans residues 478–498 (ALIILSITNMLGFFFTFLVPE). Topologically, residues 499–555 (TMGRSLEEISGEDGNTGAGGGGAPAAANAGVGVSASDVSRDEKFPASSTEWQTSMHA) are cytoplasmic. Residues 506–555 (EISGEDGNTGAGGGGAPAAANAGVGVSASDVSRDEKFPASSTEWQTSMHA) form a disordered region. A compositionally biased stretch (gly residues) spans 512-521 (GNTGAGGGGA). Over residues 522 to 535 (PAAANAGVGVSASD) the composition is skewed to low complexity. The segment covering 544-555 (ASSTEWQTSMHA) has biased composition (polar residues).

The protein belongs to the major facilitator superfamily. Phosphate:H(+) symporter (TC 2.A.1.9) family.

Its subcellular location is the membrane. Symbiosis-specific regulated inorganic phosphate (Pi) transporter. Probably involved in symbiosis-mediated Pi uptake in roots colonized by myccorhizal fungi. This Oryza sativa subsp. japonica (Rice) protein is Inorganic phosphate transporter 1-11 (PHT1-11).